The chain runs to 534 residues: Lysophosphatidylcholine acyltransferase 1 (534 aa).

The segment at 1 to 22 is disordered; sequence MRLRGCGPRAAPASSAGASDAR. Topologically, residues 1 to 57 are cytoplasmic; sequence MRLRGCGPRAAPASSAGASDARLLAPPGRNPFVHELRLSALQKAQVALMTLTLFPVR. Over residues 7 to 22 the composition is skewed to low complexity; that stretch reads GPRAAPASSAGASDAR. The helical; Signal-anchor for type II membrane protein transmembrane segment at 58 to 78 threads the bilayer; sequence LLVAAAMMLLAWPLALVASLG. Topologically, residues 79–534 are lumenal; the sequence is SAEKEPEQPP…GRKPVRKKLD (456 aa). The HXXXXD motif signature appears at 135–140; it reads HSSYFD. EF-hand domains are found at residues 379–414 and 451–486; these read PVSD…VCRP and VAEL…YPAF. The Ca(2+) site is built by aspartate 392, serine 394, serine 396, glutamate 398, and glutamate 403. The interval 512 to 534 is disordered; it reads GFCADFSPENSDAGRKPVRKKLD. Basic and acidic residues predominate over residues 523-534; that stretch reads DAGRKPVRKKLD. The short motif at 531–534 is the Di-lysine motif element; that stretch reads KKLD.

The protein belongs to the 1-acyl-sn-glycerol-3-phosphate acyltransferase family. In terms of tissue distribution, erythrocytes.

It localises to the endoplasmic reticulum membrane. It is found in the golgi apparatus membrane. The protein resides in the cell membrane. The protein localises to the lipid droplet. The enzyme catalyses a 1-acyl-sn-glycero-3-phosphocholine + an acyl-CoA = a 1,2-diacyl-sn-glycero-3-phosphocholine + CoA. The catalysed reaction is a 1-acyl-sn-glycero-3-phosphate + an acyl-CoA = a 1,2-diacyl-sn-glycero-3-phosphate + CoA. It carries out the reaction a 1-O-alkyl-sn-glycero-3-phosphocholine + acetyl-CoA = a 1-O-alkyl-2-acetyl-sn-glycero-3-phosphocholine + CoA. It catalyses the reaction a 1-O-(1Z-alkenyl)-sn-glycero-3-phosphocholine + an acyl-CoA = a 1-O-(1Z-alkenyl)-2-acyl-sn-glycero-3-phosphocholine + CoA. The enzyme catalyses 1-acyl-sn-glycero-3-phospho-(1'-sn-glycerol) + an acyl-CoA = a 1,2-diacyl-sn-glycero-3-phospho-(1'-sn-glycerol) + CoA. The catalysed reaction is 1-hexadecanoyl-sn-glycero-3-phosphocholine + (9Z)-octadecenoyl-CoA = 1-hexadecanoyl-2-(9Z-octadecenoyl)-sn-glycero-3-phosphocholine + CoA. It carries out the reaction 1-hexadecanoyl-sn-glycero-3-phosphocholine + hexadecanoyl-CoA = 1,2-dihexadecanoyl-sn-glycero-3-phosphocholine + CoA. It catalyses the reaction 1-O-hexadecyl-sn-glycero-3-phosphocholine + hexadecanoyl-CoA = 1-O-hexadecyl-2-hexadecanoyl-sn-glycero-3-phosphocholine + CoA. The enzyme catalyses a 1-O-(1Z-alkenyl)-sn-glycero-3-phosphocholine + hexadecanoyl-CoA = 1-O-(1Z)-alkenyl-2-hexadecanoyl-sn-glycero-3-phosphocholine + CoA. The catalysed reaction is 1-hexadecanoyl-sn-glycero-3-phospho-(1'-sn-glycerol) + hexadecanoyl-CoA = 1,2-dihexadecanoyl-sn-glycero-3-phospho-(1'-sn-glycerol) + CoA. It carries out the reaction 1-dodecanoyl-sn-glycero-3-phosphocholine + hexadecanoyl-CoA = 1-dodecanoyl-2-hexadecanoyl-sn-glycero-3-phosphocholine + CoA. It catalyses the reaction 1-tetradecanoyl-sn-glycero-3-phosphocholine + hexadecanoyl-CoA = 1-tetradecanoyl-2-hexadecanoyl-sn-glycero-3-phosphocholine + CoA. The enzyme catalyses 1-O-octadecyl-sn-glycero-3-phosphocholine + hexadecanoyl-CoA = 1-O-octadecyl-2-hexadecanoyl-sn-glycero-3-phosphocholine + CoA. The catalysed reaction is 1-octadecanoyl-sn-glycero-3-phosphocholine + hexadecanoyl-CoA = 1-octadecanoyl-2-hexadecanoyl-sn-glycero-3-phosphocholine + CoA. It carries out the reaction 1-(9Z-octadecenoyl)-sn-glycero-3-phosphocholine + hexadecanoyl-CoA = 1-(9Z-octadecenoyl)-2-hexadecanoyl-sn-glycero-3-phosphocholine + CoA. It catalyses the reaction 1-eicosanoyl-sn-glycero-3-phosphocholine + hexadecanoyl-CoA = 1-eicosanoyl-2-hexadecanoyl-sn-glycero-3-phosphocholine + CoA. The enzyme catalyses hexanoyl-CoA + 1-hexadecanoyl-sn-glycero-3-phosphocholine = 1-hexadecanoyl-2-hexanoyl-sn-glycero-3-phosphocholine + CoA. The catalysed reaction is octanoyl-CoA + 1-hexadecanoyl-sn-glycero-3-phosphocholine = 1-hexadecanoyl-2-octanoyl-sn-glycero-3-phosphocholine + CoA. It carries out the reaction decanoyl-CoA + 1-hexadecanoyl-sn-glycero-3-phosphocholine = 1-hexadecanoyl-2-decanoyl-sn-glycero-3-phosphocholine + CoA. It catalyses the reaction dodecanoyl-CoA + 1-hexadecanoyl-sn-glycero-3-phosphocholine = 1-hexadecanoyl-2-dodecanoyl-sn-glycero-3-phosphocholine + CoA. The enzyme catalyses tetradecanoyl-CoA + 1-hexadecanoyl-sn-glycero-3-phosphocholine = 1-hexadecanoyl-2-tetradecanoyl-sn-glycero-3-phosphocholine + CoA. The catalysed reaction is (9Z,12Z)-octadecadienoyl-CoA + 1-hexadecanoyl-sn-glycero-3-phosphocholine = 1-hexadecanoyl-2-(9Z,12Z-octadecadienoyl)-sn-glycero-3-phosphocholine + CoA. It carries out the reaction (4Z,7Z,10Z,13Z,16Z,19Z)-docosahexaenoyl-CoA + 1-hexadecanoyl-sn-glycero-3-phosphocholine = 1-hexadecanoyl-2-(4Z,7Z,10Z,13Z,16Z,19Z-docosahexaenoyl)-sn-glycero-3-phosphocholine + CoA. It catalyses the reaction 1-hexadecanoyl-sn-glycero-3-phosphocholine + acetyl-CoA = 1-hexadecanoyl-2-acetyl-sn-glycero-3-phosphocholine + CoA. The enzyme catalyses eicosanoyl-CoA + 1-hexadecanoyl-sn-glycero-3-phosphocholine = 1-hexadecanoyl-2-eicosanoyl-sn-glycero-3-phosphocholine + CoA. The catalysed reaction is 1-O-hexadecyl-sn-glycero-3-phosphocholine + acetyl-CoA = 1-O-hexadecyl-2-acetyl-sn-glycero-3-phosphocholine + CoA. It carries out the reaction a 1-acyl-sn-glycero-3-phosphocholine + hexadecanoyl-CoA = 1-acyl-2-hexadecanoyl-sn-glycero-3-phosphocholine + CoA. It catalyses the reaction a 1-acyl-sn-glycero-3-phosphate + hexadecanoyl-CoA = 1-acyl-2-hexadecanoyl-sn-glycero-3-phosphate + CoA. The enzyme catalyses 1-acyl-sn-glycero-3-phospho-(1'-sn-glycerol) + hexadecanoyl-CoA = 1-acyl-2-hexadecanoyl-sn-glycero-3-phospho-(1'-sn-glycerol) + CoA. It participates in lipid metabolism; phospholipid metabolism. Functionally, exhibits acyltransferase activity. Exhibits acetyltransferase activity. Activity is calcium-independent. Catalyzes the conversion of lysophosphatidylcholine (1-acyl-sn-glycero-3-phosphocholine or LPC) into phosphatidylcholine (1,2-diacyl-sn-glycero-3-phosphocholine or PC). Catalyzes the conversion 1-acyl-sn-glycerol-3-phosphate (lysophosphatidic acid or LPA) into 1,2-diacyl-sn-glycerol-3-phosphate (phosphatidic acid or PA) by incorporating an acyl moiety at the sn-2 position of the glycerol backbone. Displays a clear preference for saturated fatty acyl-CoAs, and 1-myristoyl or 1-palmitoyl LPC as acyl donors and acceptors, respectively. Involved in platelet-activating factor (PAF) biosynthesis by catalyzing the conversion of the PAF precursor, 1-O-alkyl-sn-glycero-3-phosphocholine (lyso-PAF) into 1-O-alkyl-2-acetyl-sn-glycero-3-phosphocholine (PAF). May synthesize phosphatidylcholine in pulmonary surfactant, thereby playing a pivotal role in respiratory physiology. Involved in the regulation of lipid droplet number and size. The polypeptide is Lysophosphatidylcholine acyltransferase 1 (LPCAT1) (Homo sapiens (Human)).